The primary structure comprises 39 residues: Fructose 5-dehydrogenase [NADP(+)] (39 aa).

It carries out the reaction D-fructose + NADP(+) = 5-dehydro-D-fructose + NADPH + H(+). This is Fructose 5-dehydrogenase [NADP(+)] from Erwinia citreus.